The primary structure comprises 889 residues: Terminal uridylyltransferase 3 (889 aa).

The C2H2-type; atypical zinc finger occupies valine 123 to leucine 151. Zn(2+)-binding residues include cysteine 125, cysteine 128, histidine 143, and histidine 148. Residues serine 225 and serine 236–aspartate 239 each bind UTP. Mg(2+) contacts are provided by aspartate 237 and aspartate 239. Arginine 286 is an RNA binding site. Residues glycine 394–serine 398, lysine 419, lysine 423, and serine 437–tyrosine 438 contribute to the UTP site. The PAP-associated domain maps to leucine 505–asparagine 572. The short motif at isoleucine 565–asparagine 574 is the Nucleotide recognition motif (NRM) element. 2 disordered regions span residues asparagine 675 to serine 702 and arginine 829 to glycine 849. The segment covering arginine 829–asparagine 846 has biased composition (basic residues).

The protein belongs to the DNA polymerase type-B-like family. It depends on Mg(2+) as a cofactor. Mn(2+) is required as a cofactor.

Its subcellular location is the cytoplasm. The enzyme catalyses RNA(n) + UTP = RNA(n)-3'-uridine ribonucleotide + diphosphate. In terms of biological role, terminal uridylyltransferase which catalyzes the addition of Us to the 3'-hydroxyl group of single-stranded RNAs. Does not mediate RNA-independent UTP polymerization. This Trypanosoma brucei brucei protein is Terminal uridylyltransferase 3.